Reading from the N-terminus, the 579-residue chain is Glypican-2 (579 aa).

The N-terminal stretch at 1–21 (MSALRPLLLLLLHLCPGLGPG) is a signal peptide. S55, S92, and S155 each carry an O-linked (Xyl...) (heparan sulfate) serine glycan. Disordered regions lie at residues 347-382 (GTPH…PTTA) and 483-552 (ALGQ…GRSR). A compositionally biased stretch (basic and acidic residues) spans 361-379 (APREEASRSWRASAEEERP). S498 and S500 each carry an O-linked (Xyl...) (heparan sulfate) serine glycan. A compositionally biased stretch (pro residues) spans 517 to 527 (VVPPARPPRPP). Residue S556 is the site of GPI-anchor amidated serine attachment. Positions 557–579 (SVGLHTPLVLLLLPSALTLLVLR) are cleaved as a propeptide — removed in mature form.

The protein belongs to the glypican family. In terms of assembly, interacts (via heparan sulfate) with PTN; this interaction promotes neurite outgrowth through binding of PTN with chondroitin sulfate of proteoglycans, thereby releasing PTPRS of chondroitin sulfate proteoglycans (CSPGs) and leading to binding with heparan sulfate of GPC2. Interacts (heparan sulfate chain) with MDK; this interaction is inhibited by heparin followed by chondroitin sulfate E; this interaction induces GPC2 clustering through heparan sulfate chain; this interaction induces neuronal cell adhesion and neurite outgrowth.

It localises to the cell membrane. The protein localises to the secreted. The protein resides in the extracellular space. In terms of biological role, cell surface proteoglycan that bears heparan sulfate. May fulfill a function related to the motile behaviors of developing neurons. In Mus musculus (Mouse), this protein is Glypican-2 (Gpc2).